The primary structure comprises 95 residues: Large ribosomal subunit protein uL23 (95 aa).

Belongs to the universal ribosomal protein uL23 family. Part of the 50S ribosomal subunit. Contacts protein L29, and trigger factor when it is bound to the ribosome.

In terms of biological role, one of the early assembly proteins it binds 23S rRNA. One of the proteins that surrounds the polypeptide exit tunnel on the outside of the ribosome. Forms the main docking site for trigger factor binding to the ribosome. The chain is Large ribosomal subunit protein uL23 from Rubrobacter xylanophilus (strain DSM 9941 / JCM 11954 / NBRC 16129 / PRD-1).